Here is a 194-residue protein sequence, read N- to C-terminus: Peptidyl-tRNA hydrolase (194 aa).

A tRNA-binding site is contributed by Tyr17. His22 serves as the catalytic Proton acceptor. Residues Phe69, Asn71, and Asn117 each coordinate tRNA.

Belongs to the PTH family. As to quaternary structure, monomer.

It is found in the cytoplasm. The enzyme catalyses an N-acyl-L-alpha-aminoacyl-tRNA + H2O = an N-acyl-L-amino acid + a tRNA + H(+). Functionally, hydrolyzes ribosome-free peptidyl-tRNAs (with 1 or more amino acids incorporated), which drop off the ribosome during protein synthesis, or as a result of ribosome stalling. Catalyzes the release of premature peptidyl moieties from peptidyl-tRNA molecules trapped in stalled 50S ribosomal subunits, and thus maintains levels of free tRNAs and 50S ribosomes. The polypeptide is Peptidyl-tRNA hydrolase (Renibacterium salmoninarum (strain ATCC 33209 / DSM 20767 / JCM 11484 / NBRC 15589 / NCIMB 2235)).